A 659-amino-acid chain; its full sequence is WD repeat-containing protein 48 homolog (659 aa).

WD repeat units follow at residues 27–66 (RHRNGVNALQLDTINGRLYSAGRDAIIRVWNSMQNNSQEP), 73–112 (HHNDWVNDIVLCCGGRNLISASCDTTVKVWNAHKGFCMST), 115–154 (THRDYVQALAYAKDREQVASAGLDKAIFLWDINTLTALTA), 166–205 (GSKDSIYSLAMNPSGTVIVCGSTENTLRIWDPRTCNKIAK), 208–247 (GHAENVKALVVSEDGQHVISGSSDGKIKQWSIGQQRCVQT), 250–289 (VHSEGVWALLMTDNFSHVISGSRDKKIIMTDLRNPTNSVL), 292–331 (EERAPVLSLCYNYDQTGVWATTWNSDIRCWKLNPSEKLSF), and 337–376 (KGGAAIKKYHVLNDKRFMLTKDSEMNVAIYDVLKVKKVED). The disordered stretch occupies residues 592–613 (ASTGNSNSSQNNSQSDANSEGS). Positions 596–610 (NSNSSQNNSQSDANS) are enriched in low complexity.

This sequence belongs to the WD repeat WDR48 family. As to quaternary structure, catalytic component of the Usp12-46 deubiquitylase complex consisting of Usp12-46, Wdr20 and Uaf1; regulatory subunit that, together wtih Wdr20, stabilizes Usp12-46. The Usp12-46 deubiquitylase complex associates with arr/arrow; the interaction leads to deubiquitination and stabilization of arr/arrow.

In terms of biological role, regulatory component of the Usp12-46 deubiquitylase complex. activates deubiquitination by increasing the catalytic turnover without increasing the affinity of deubiquitinating enzymes for the substrate. The complex deubiquitylates the wg/wingless-signaling receptor arr/arrow, which stabilizes the receptor and increases its concentration at the cell surface; this enhances the sensitivity of cells to wg/wingless-signal stimulation. This increases the amplitude and spatial range of the signaling response to the wg/wingless morphogen gradient, facilitating the precise concentration-dependent regulation of its target genes. Together with Wdr20 and Usp12-46 required for wg/wingless-mediated signaling in the wing imaginal disc and for wg/wingless-dependent regulation of intestinal stem cell proliferation. This is WD repeat-containing protein 48 homolog from Aedes aegypti (Yellowfever mosquito).